The chain runs to 345 residues: S-adenosylmethionine:tRNA ribosyltransferase-isomerase (345 aa).

It belongs to the QueA family. In terms of assembly, monomer.

It is found in the cytoplasm. It carries out the reaction 7-aminomethyl-7-carbaguanosine(34) in tRNA + S-adenosyl-L-methionine = epoxyqueuosine(34) in tRNA + adenine + L-methionine + 2 H(+). Its pathway is tRNA modification; tRNA-queuosine biosynthesis. In terms of biological role, transfers and isomerizes the ribose moiety from AdoMet to the 7-aminomethyl group of 7-deazaguanine (preQ1-tRNA) to give epoxyqueuosine (oQ-tRNA). This Azoarcus sp. (strain BH72) protein is S-adenosylmethionine:tRNA ribosyltransferase-isomerase.